The following is a 448-amino-acid chain: Tubulin beta chain (448 aa).

The GTP site is built by glutamine 11, glutamate 69, serine 138, glycine 142, threonine 143, glycine 144, asparagine 204, and asparagine 226. A Mg(2+)-binding site is contributed by glutamate 69. Positions 425–448 (YQDASISEGEEEYLEEEEPLEHEE) are disordered. The segment covering 432 to 448 (EGEEEYLEEEEPLEHEE) has biased composition (acidic residues).

This sequence belongs to the tubulin family. Dimer of alpha and beta chains. A typical microtubule is a hollow water-filled tube with an outer diameter of 25 nm and an inner diameter of 15 nM. Alpha-beta heterodimers associate head-to-tail to form protofilaments running lengthwise along the microtubule wall with the beta-tubulin subunit facing the microtubule plus end conferring a structural polarity. Microtubules usually have 13 protofilaments but different protofilament numbers can be found in some organisms and specialized cells. The cofactor is Mg(2+).

The protein localises to the cytoplasm. It localises to the cytoskeleton. In terms of biological role, tubulin is the major constituent of microtubules, a cylinder consisting of laterally associated linear protofilaments composed of alpha- and beta-tubulin heterodimers. Microtubules grow by the addition of GTP-tubulin dimers to the microtubule end, where a stabilizing cap forms. Below the cap, tubulin dimers are in GDP-bound state, owing to GTPase activity of alpha-tubulin. The protein is Tubulin beta chain (benA56) of Aspergillus oryzae (strain ATCC 42149 / RIB 40) (Yellow koji mold).